The following is a 650-amino-acid chain: Acetyl-coenzyme A synthetase (650 aa).

CoA is bound by residues 191 to 194, Thr311, and Asn335; that span reads RGGR. Residues 387 to 389, 411 to 416, Asp500, and Arg515 each bind ATP; these read GEP and DTWWQT. Ser523 serves as a coordination point for CoA. Arg526 contributes to the ATP binding site. 3 residues coordinate Mg(2+): Val537, His539, and Val542. Arg584 lines the CoA pocket. At Lys609 the chain carries N6-acetyllysine.

This sequence belongs to the ATP-dependent AMP-binding enzyme family. The cofactor is Mg(2+). Post-translationally, acetylated. Deacetylation by the SIR2-homolog deacetylase activates the enzyme.

The catalysed reaction is acetate + ATP + CoA = acetyl-CoA + AMP + diphosphate. Catalyzes the conversion of acetate into acetyl-CoA (AcCoA), an essential intermediate at the junction of anabolic and catabolic pathways. AcsA undergoes a two-step reaction. In the first half reaction, AcsA combines acetate with ATP to form acetyl-adenylate (AcAMP) intermediate. In the second half reaction, it can then transfer the acetyl group from AcAMP to the sulfhydryl group of CoA, forming the product AcCoA. This chain is Acetyl-coenzyme A synthetase, found in Shewanella sp. (strain MR-4).